The following is a 103-amino-acid chain: G0/G1 switch protein 2 (103 aa).

As to quaternary structure, directly interacts with BCL2; this interaction prevents the formation of the anti-apoptotic BAX-BCL2 complex.

Its subcellular location is the mitochondrion. In terms of biological role, promotes apoptosis by binding to BCL2, hence preventing the formation of protective BCL2-BAX heterodimers. The polypeptide is G0/G1 switch protein 2 (G0s2) (Rattus norvegicus (Rat)).